Here is an 82-residue protein sequence, read N- to C-terminus: Translational regulator CsrA (82 aa).

Belongs to the CsrA/RsmA family. As to quaternary structure, homodimer; the beta-strands of each monomer intercalate to form a hydrophobic core while the alpha-helices form wings that extend away from the core. Each of the alpha-helical wings interacts with an FliW monomer, yielding a FliW-CsrA(2)-FliW complex.

The protein resides in the cytoplasm. Its function is as follows. A translational regulator that binds mRNA to regulate translation initiation and/or mRNA stability. Usually binds in the 5'-UTR at or near the Shine-Dalgarno sequence preventing ribosome-binding, thus repressing translation. Its main target seems to be the major flagellin gene, while its function is anatagonized by FliW. The polypeptide is Translational regulator CsrA (Geobacillus thermodenitrificans (strain NG80-2)).